Consider the following 184-residue polypeptide: Chaperone protein dnaJ 72 (184 aa).

The 71-residue stretch at 3 to 73 folds into the J domain; sequence DHYQVLGVTR…LKRASYNAGS (71 aa). A helical transmembrane segment spans residues 133–150; it reads FLLNLALAGGLYFAFTAI.

This sequence belongs to the DnaJ family. C/III subfamily.

Its subcellular location is the membrane. Its function is as follows. Plays a continuous role in plant development probably in the structural organization of compartments. The protein is Chaperone protein dnaJ 72 (ATJ72) of Arabidopsis thaliana (Mouse-ear cress).